The following is a 4022-amino-acid chain: Intermembrane lipid transfer protein VPS13B (4022 aa).

Positions 2 to 102 constitute a Chorein N-terminal domain; it reads LESYVTPILM…KDGIQDDHES (101 aa). Positions 100–134 are disordered; sequence HESCGSNSTNRSTAESTKSSIKPRRMQQAAPTDPD. The span at 103 to 119 shows a compositional bias: polar residues; the sequence is CGSNSTNRSTAESTKSS. Phosphoserine occurs at positions 414, 999, 1002, and 1033. Positions 1247–1314 are disordered; the sequence is NLSPTSPETM…SVTLEQTTSN (68 aa). Composition is skewed to polar residues over residues 1264-1292 and 1302-1314; these read PVRS…TEGD and FSDS…TTSN. At serine 1815 the chain carries Phosphoserine. Positions 1860–1872 are enriched in basic and acidic residues; the sequence is KSQEQKNNEKTDK. Residues 1860-1880 are disordered; the sequence is KSQEQKNNEKTDKSSLNLPEV. Positions 2631–2716 constitute an SHR-BD domain; the sequence is HFVICNDTQE…RTASLIIKVQ (86 aa). The interval 3908 to 4022 is localizes the protein to the Golgi apparatus; that stretch reads AFPVTEIDCA…KNKALRKGFP (115 aa).

This sequence belongs to the VPS13 family. In terms of assembly, interacts with STX6. Interacts with STX12. Interacts with RAB6A isoform 1 (GTP-bound) and isoform 2 (GTP-bound). Interacts with RAB6B (GTP-bound). Widely expressed. There is apparent differential expression of different transcripts. In fetal brain, lung, liver, and kidney, two transcripts of 2 and 5 kb are identified. These transcripts are also seen in all adult tissues analyzed. A larger transcript (12-14 kb) is expressed in prostate, testis, ovary, and colon in the adult. Expression is very low in adult brain tissue. Expressed in peripheral blood lymphocytes. Isoform 1 and isoform 2 are expressed in brain and retina. Isoform 2 is expressed ubiquitously.

Its subcellular location is the recycling endosome membrane. The protein localises to the cytoplasmic vesicle. It is found in the secretory vesicle. It localises to the acrosome membrane. The protein resides in the golgi apparatus. Its subcellular location is the cis-Golgi network membrane. The protein localises to the endoplasmic reticulum-Golgi intermediate compartment membrane. It is found in the trans-Golgi network membrane. It localises to the early endosome membrane. The protein resides in the lysosome membrane. In terms of biological role, mediates the transfer of lipids between membranes at organelle contact sites. Binds phosphatidylinositol 3-phosphate. Functions as a tethering factor in the slow endocytic recycling pathway, to assist traffic between early and recycling endosomes. Involved in the transport of proacrosomal vesicles to the nuclear dense lamina (NDL) during spermatid development. Plays a role in the assembly of the Golgi apparatus, possibly by mediating trafficking to the Golgi membrane. Plays a role in the development of the nervous system, and may be required for neuron projection development. May also play a role during adipose tissue development. Required for maintenance of the ocular lens. The sequence is that of Intermembrane lipid transfer protein VPS13B (VPS13B) from Homo sapiens (Human).